Consider the following 1520-residue polypeptide: Glutamate synthase [NADPH] large chain (1520 aa).

The active-site For GATase activity is cysteine 22. One can recognise a Glutamine amidotransferase type-2 domain in the interval cysteine 22 to glutamate 415. The tract at residues glycine 890–aspartate 913 is disordered. Positions glutamate 900–aspartate 913 are enriched in basic and acidic residues. Leucine 1060–glycine 1112 is an FMN binding site. 3 residues coordinate [3Fe-4S] cluster: cysteine 1113, cysteine 1119, and cysteine 1124.

It belongs to the glutamate synthase family. Aggregate of 4 catalytic active heterodimers, consisting of a large and a small subunit. It depends on [3Fe-4S] cluster as a cofactor. FAD serves as cofactor. The cofactor is FMN.

It catalyses the reaction 2 L-glutamate + NADP(+) = L-glutamine + 2-oxoglutarate + NADPH + H(+). It functions in the pathway amino-acid biosynthesis; L-glutamate biosynthesis via GLT pathway; L-glutamate from 2-oxoglutarate and L-glutamine (NADP(+) route): step 1/1. The protein operates within energy metabolism; nitrogen metabolism. The sequence is that of Glutamate synthase [NADPH] large chain (gltA) from Bacillus subtilis (strain 168).